Here is a 138-residue protein sequence, read N- to C-terminus: Large ribosomal subunit protein uL16 (138 aa).

Residues 1 to 13 (MLQPSRRKFRKEQ) show a composition bias toward basic residues. The interval 1–20 (MLQPSRRKFRKEQKGRNTGV) is disordered.

This sequence belongs to the universal ribosomal protein uL16 family. In terms of assembly, part of the 50S ribosomal subunit.

Functionally, binds 23S rRNA and is also seen to make contacts with the A and possibly P site tRNAs. This chain is Large ribosomal subunit protein uL16, found in Leptothrix cholodnii (strain ATCC 51168 / LMG 8142 / SP-6) (Leptothrix discophora (strain SP-6)).